A 492-amino-acid chain; its full sequence is UDP-N-acetylmuramoyl-L-alanyl-D-glutamate--2,6-diaminopimelate ligase (492 aa).

Ser30 lines the UDP-N-acetyl-alpha-D-muramoyl-L-alanyl-D-glutamate pocket. 114 to 120 (GTNGKTS) contacts ATP. Residues 156–157 (TT), Ser183, Gln189, and Arg191 contribute to the UDP-N-acetyl-alpha-D-muramoyl-L-alanyl-D-glutamate site. N6-carboxylysine is present on Lys223. Residues Arg389, 413–416 (DNPR), Gly462, and Glu466 each bind meso-2,6-diaminopimelate. The short motif at 413 to 416 (DNPR) is the Meso-diaminopimelate recognition motif element.

The protein belongs to the MurCDEF family. MurE subfamily. Requires Mg(2+) as cofactor. In terms of processing, carboxylation is probably crucial for Mg(2+) binding and, consequently, for the gamma-phosphate positioning of ATP.

It localises to the cytoplasm. The catalysed reaction is UDP-N-acetyl-alpha-D-muramoyl-L-alanyl-D-glutamate + meso-2,6-diaminopimelate + ATP = UDP-N-acetyl-alpha-D-muramoyl-L-alanyl-gamma-D-glutamyl-meso-2,6-diaminopimelate + ADP + phosphate + H(+). The protein operates within cell wall biogenesis; peptidoglycan biosynthesis. Its function is as follows. Catalyzes the addition of meso-diaminopimelic acid to the nucleotide precursor UDP-N-acetylmuramoyl-L-alanyl-D-glutamate (UMAG) in the biosynthesis of bacterial cell-wall peptidoglycan. The chain is UDP-N-acetylmuramoyl-L-alanyl-D-glutamate--2,6-diaminopimelate ligase from Neisseria meningitidis serogroup B (strain ATCC BAA-335 / MC58).